Consider the following 114-residue polypeptide: 11.9 kDa wall protein (114 aa).

Positions 1–6 are excised as a propeptide; the sequence is MSFKTR.

The protein resides in the secreted. It is found in the cell wall. Its function is as follows. May play a role in the structure of the hypha-forming fruit bodies. The polypeptide is 11.9 kDa wall protein (TDF-1) (Tuber dryophilum (Truffle)).